Here is a 191-residue protein sequence, read N- to C-terminus: Cell division protein SepF (191 aa).

Positions 150 to 191 are disordered; sequence TSSSPEEASPSSVSPKNTPQYSVENNTAPEPAWGNSKLSAFS. Residues 151–164 are compositionally biased toward low complexity; that stretch reads SSSPEEASPSSVSP. The span at 165-177 shows a compositional bias: polar residues; sequence KNTPQYSVENNTA.

The protein belongs to the SepF family. As to quaternary structure, homodimer. Interacts with FtsZ.

It is found in the cytoplasm. Functionally, cell division protein that is part of the divisome complex and is recruited early to the Z-ring. Probably stimulates Z-ring formation, perhaps through the cross-linking of FtsZ protofilaments. Its function overlaps with FtsA. The sequence is that of Cell division protein SepF from Prochlorococcus marinus (strain MIT 9312).